The sequence spans 237 residues: Class B acid phosphatase (237 aa).

An N-terminal signal peptide occupies residues 1–23 (MRKTPLALSAVFLLLSLNQSAFA). Catalysis depends on D69, which acts as the Nucleophile. 2 residues coordinate Mg(2+): D69 and D71. Residue D71 is the Proton donor of the active site. Substrate-binding positions include 137–138 (TG) and K177. Mg(2+) is bound at residue D192.

Belongs to the class B bacterial acid phosphatase family. As to quaternary structure, homotetramer. Requires Mg(2+) as cofactor.

It localises to the periplasm. It carries out the reaction a phosphate monoester + H2O = an alcohol + phosphate. Dephosphorylates several organic phosphate monoesters. Also has a phosphotransferase activity catalyzing the transfer of low-energy phosphate groups from organic phosphate monoesters to free hydroxyl groups of various organic compounds. The sequence is that of Class B acid phosphatase from Rahnella sp. (strain Y9602).